The sequence spans 514 residues: Extracellular exo-inulinase inuE (514 aa).

The first 18 residues, 1–18 (MRAFLALIFLTFVMNVES), serve as a signal peptide directing secretion. Substrate-binding positions include 33–34 (ND) and glutamine 52. Catalysis depends on aspartate 34, which acts as the Nucleophile. An N-linked (GlcNAc...) asparagine glycan is attached at asparagine 56. Positions 60 and 95 each coordinate substrate. Asparagine 104 and asparagine 110 each carry an N-linked (GlcNAc...) asparagine glycan. Position 162–163 (162–163 (RD)) interacts with substrate. Residues asparagine 197 and asparagine 203 are each glycosylated (N-linked (GlcNAc...) asparagine). 2 residues coordinate substrate: glutamate 214 and tryptophan 300. Glutamate 214 serves as the catalytic Proton donor/acceptor. N-linked (GlcNAc...) asparagine glycans are attached at residues asparagine 357, asparagine 371, asparagine 389, and asparagine 422.

It belongs to the glycosyl hydrolase 32 family.

It is found in the secreted. The enzyme catalyses Hydrolysis of terminal, non-reducing (2-&gt;1)- and (2-&gt;6)-linked beta-D-fructofuranose residues in fructans.. Its function is as follows. Exo-inulinase involved in utilization of the plant storage polymer inulin, consisting of fructooligosaccharides with a degree of polymerization (DP) value from 2 to 60. Splits off terminal fructose units successively from the non-reducing end of the inulin molecule. This is Extracellular exo-inulinase inuE from Meyerozyma guilliermondii (Yeast).